A 286-amino-acid chain; its full sequence is Probable protein S-acyltransferase 16 (286 aa).

Helical transmembrane passes span 11–31 and 45–65; these read PVTV…FTFI and NAAA…IAVF. One can recognise a DHHC domain in the interval 97-147; sequence RYCQKCSHFKPPRAHHCRVCKRCVLRMDHHCIWINNCVGHTNYKVFFVFVV. The S-palmitoyl cysteine intermediate role is filled by Cys-127. 2 helical membrane-spanning segments follow: residues 141–161 and 182–202; these read VFFV…VLLV and IYVI…VLLG.

The protein belongs to the DHHC palmitoyltransferase family.

Its subcellular location is the golgi apparatus membrane. The catalysed reaction is L-cysteinyl-[protein] + hexadecanoyl-CoA = S-hexadecanoyl-L-cysteinyl-[protein] + CoA. Functionally, palmitoyl acyltransferase. The protein is Probable protein S-acyltransferase 16 (PAT16) of Arabidopsis thaliana (Mouse-ear cress).